A 669-amino-acid chain; its full sequence is NAD-dependent malic enzyme, mitochondrial (669 aa).

The segment covering 33-43 has biased composition (polar residues); the sequence is IQQSRLYSSNT. Positions 33–68 are disordered; that stretch reads IQQSRLYSSNTRSHKATTTRENTFQKPYSDEEVTKT. Residue arginine 142 coordinates fumarate. Catalysis depends on tyrosine 187, which acts as the Proton donor. Lysine 259 (proton acceptor) is an active-site residue. Positions 330, 331, and 354 each coordinate a divalent metal cation. The NAD(+) site is built by alanine 387 and alanine 390. Asparagine 499 and asparagine 539 together coordinate (S)-malate.

The protein belongs to the malic enzymes family. The cofactor is Mg(2+). Mn(2+) serves as cofactor.

The protein localises to the mitochondrion matrix. The catalysed reaction is (S)-malate + NAD(+) = pyruvate + CO2 + NADH. It catalyses the reaction oxaloacetate + H(+) = pyruvate + CO2. Its function is as follows. NAD-dependent mitochondrial malic enzyme that catalyzes the oxidative decarboxylation of malate to pyruvate. This is NAD-dependent malic enzyme, mitochondrial (MAE1) from Saccharomyces cerevisiae (strain ATCC 204508 / S288c) (Baker's yeast).